We begin with the raw amino-acid sequence, 353 residues long: F-box protein At2g14290 (353 aa).

The 53-residue stretch at 6–58 (PRTWSELPPDLLGSIFHRLSFTDFHRAKIVCWNWNLSSKLTVPKKIRSPWLML) folds into the F-box domain.

In Arabidopsis thaliana (Mouse-ear cress), this protein is F-box protein At2g14290.